The sequence spans 467 residues: Probable glutamate decarboxylase gamma (467 aa).

Position 278 is an N6-(pyridoxal phosphate)lysine (Lys-278).

It belongs to the group II decarboxylase family. The cofactor is pyridoxal 5'-phosphate.

It catalyses the reaction L-glutamate + H(+) = 4-aminobutanoate + CO2. The polypeptide is Probable glutamate decarboxylase gamma (Listeria innocua serovar 6a (strain ATCC BAA-680 / CLIP 11262)).